The following is a 94-amino-acid chain: MASGQEKGRSELDSLAREGQTVVPGGTGGKSYEAQEKLAEGRSRGGQTRKEQMGEEGYSEMGRKGGLSTNDESGGERAAREGIDIDESKFKTKS.

Composition is skewed to basic and acidic residues over residues 1 to 16 (MASGQEKGRSELDSLA), 33 to 53 (EAQEKLAEGRSRGGQTRKEQM), and 74 to 94 (GGERAAREGIDIDESKFKTKS). A disordered region spans residues 1-94 (MASGQEKGRS…IDESKFKTKS (94 aa)).

The protein belongs to the small hydrophilic plant seed protein family.

It is thought to provide protection for the cytoplasm during the desiccation stage of embryo development. This chain is Em protein CS41 (EM), found in Triticum aestivum (Wheat).